The sequence spans 295 residues: Forkhead box protein N5 (295 aa).

Residues 119–146 (STVEDSEDEAPTSCSDLMTDDDNDDSYN) form a disordered region. Residues 178–275 (RPPLNYCNLI…NEMHALSDDL (98 aa)) constitute a DNA-binding region (fork-head).

In terms of tissue distribution, ubiquitously expressed in early cleavage stage and gastrula stage embryos.

The protein resides in the nucleus. The sequence is that of Forkhead box protein N5 from Xenopus laevis (African clawed frog).